We begin with the raw amino-acid sequence, 219 residues long: tRNA (guanine-N(7)-)-methyltransferase (219 aa).

The S-adenosyl-L-methionine site is built by E43, D68, E101, and N124. K128 and D160 together coordinate substrate.

The protein belongs to the class I-like SAM-binding methyltransferase superfamily. TrmB family.

The catalysed reaction is guanosine(46) in tRNA + S-adenosyl-L-methionine = N(7)-methylguanosine(46) in tRNA + S-adenosyl-L-homocysteine. It participates in tRNA modification; N(7)-methylguanine-tRNA biosynthesis. Its function is as follows. Catalyzes the formation of N(7)-methylguanine at position 46 (m7G46) in tRNA. In Clostridium botulinum (strain Eklund 17B / Type B), this protein is tRNA (guanine-N(7)-)-methyltransferase.